We begin with the raw amino-acid sequence, 98 residues long: Citrate lyase acyl carrier protein (98 aa).

An O-(phosphoribosyl dephospho-coenzyme A)serine modification is found at Ser-14.

The protein belongs to the CitD family. As to quaternary structure, oligomer with a subunit composition of (alpha,beta,gamma)6.

The protein localises to the cytoplasm. Functionally, covalent carrier of the coenzyme of citrate lyase. This is Citrate lyase acyl carrier protein from Citrobacter koseri (strain ATCC BAA-895 / CDC 4225-83 / SGSC4696).